The following is a 311-amino-acid chain: MEDKNGAPHGAPHSDSPLGFSHAAPEEDTPAPELAPEAPEPPEEPRLGVLTVTDTTPDSMRLSWSVAQGPFDSFVVQYEDTNGQPQALLVDGDQSKILISGLEPSTPYRFLLYGLHEGKRLGPLSAEGTTGLAPAGQTSEESRPRLSQLSVTDVTTSSLRLNWEAPPGAFDSFLLRFGVPSPSTLEPHPRPLLQRELMVPGTRHSAVLRDLRSGTLYSLTLYGLRGPHKADSIQGTARTLSPVLESPRDLQFSEIRETSAKVNWMPPPSRADSFKVSYQLADGGEPQSVQVDGRARTQKLQFLTVPHSCVH.

Disordered regions lie at residues 1–47 (MEDK…EPRL) and 124–150 (LSAEGTTGLAPAGQTSEESRPRLSQLS). Fibronectin type-III domains lie at 41-135 (PPEE…LAPA), 145-249 (RLSQ…SPRD), and 250-311 (LQFS…SCVH).

In terms of tissue distribution, expressed in the adrenal gland.

This is Putative tenascin-XA (TNXA) from Homo sapiens (Human).